Reading from the N-terminus, the 400-residue chain is MTQFASPVLHTLLDTDAYKLHMQQAVFHHYYDVQVAAEFRCRGDDLLGIYADSIREQVDAMQHLALQDDEYQWLSGLPFFKADYLDWLRDFRFNPEQVTITNDNGKLNIRLAGPWREVIMWEVPLLAVISEIVHRYRSPEMGVEHALATLESKLGEFAQMTESVDMSRFRLMDFGTRRRFSREVQQAIVKRLQQEPWFVGTSNYDLARRRNLTPMGTQAHEWFQAHQQISPDLATSQRAALAAWLEEYPDQLGIALTDCITMDAFLRDFGPEFAQRYQGLRHDSGDPVEWGEKAIAHYKKLGIDPLTKVLVFSDNLDLSKALELYRHFSARVNLSFGIGTRLTCDIPQVKPLNIVIKLVECNGKPVAKLSDSPGKTICHDKAFVRALRKAFDLPQIKKAS.

His220 carries the phosphohistidine; by autocatalysis modification.

Belongs to the NAPRTase family. In terms of processing, transiently phosphorylated on a His residue during the reaction cycle. Phosphorylation strongly increases the affinity for substrates and increases the rate of nicotinate D-ribonucleotide production. Dephosphorylation regenerates the low-affinity form of the enzyme, leading to product release.

It carries out the reaction nicotinate + 5-phospho-alpha-D-ribose 1-diphosphate + ATP + H2O = nicotinate beta-D-ribonucleotide + ADP + phosphate + diphosphate. The protein operates within cofactor biosynthesis; NAD(+) biosynthesis; nicotinate D-ribonucleotide from nicotinate: step 1/1. Functionally, catalyzes the synthesis of beta-nicotinate D-ribonucleotide from nicotinate and 5-phospho-D-ribose 1-phosphate at the expense of ATP. This is Nicotinate phosphoribosyltransferase from Enterobacter sp. (strain 638).